A 348-amino-acid chain; its full sequence is MLICHQCLSSRLTYISNLGLNIAYRLIEQFTDDSKLVIVVTSRTLPRVREVVDLIKTYAEKCGKSGAVDFDYLLVDFTDMVSVLGAAYELEKRYDAIHYFYANAAQGVYSGIDWLGATKAVLRDPLDAVTNPTYKIQRVGVKSRDGLGLVFQANVFGPYYLIRRIIPLLAKGKAKVVWLSSLMSDVKYLSLEDVELLRTDSSYEGSKRLVDLLHLATYKELKSLGIHQYVTHPGIFTSHSFYQYLNFFTYYGMLFLFYLARWLGSPWHNIQGYKGANAPIYVATLANPTFEHQALKYGSATYRDGMEYIAKHEIDPTGMHDAYKYIRDLAEEWDIKLKDQITIGRSLS.

The NADP(+) site is built by L18, V37, T41, R47, and R163. Catalysis depends on proton donor residues S180 and Y203. NADP(+) is bound by residues Y203, K207, and S238. The Lowers pKa of active site Tyr role is filled by K207.

The protein belongs to the short-chain dehydrogenases/reductases (SDR) family. ERG27 subfamily.

It carries out the reaction a 3beta-hydroxysteroid + NADP(+) = a 3-oxosteroid + NADPH + H(+). It functions in the pathway steroid biosynthesis; zymosterol biosynthesis; zymosterol from lanosterol: step 5/6. Responsible for the reduction of the keto group on the C-3 of sterols. The sequence is that of 3-keto-steroid reductase (ERG27) from Eremothecium gossypii (strain ATCC 10895 / CBS 109.51 / FGSC 9923 / NRRL Y-1056) (Yeast).